We begin with the raw amino-acid sequence, 505 residues long: Deoxyguanosinetriphosphate triphosphohydrolase (505 aa).

An HD domain is found at Arg-66–Cys-273.

Belongs to the dGTPase family. Type 1 subfamily. In terms of assembly, homotetramer. Requires Mg(2+) as cofactor.

It carries out the reaction dGTP + H2O = 2'-deoxyguanosine + triphosphate + H(+). Its function is as follows. dGTPase preferentially hydrolyzes dGTP over the other canonical NTPs. The polypeptide is Deoxyguanosinetriphosphate triphosphohydrolase (Shigella flexneri).